The chain runs to 180 residues: NADH-quinone oxidoreductase subunit I (180 aa).

2 4Fe-4S ferredoxin-type domains span residues 50–80 and 90–119; these read LTRD…LQKA and EFFR…LTPD. Positions 60, 63, 66, 70, 99, 102, 105, and 109 each coordinate [4Fe-4S] cluster.

Belongs to the complex I 23 kDa subunit family. In terms of assembly, NDH-1 is composed of 13 different subunits. Subunits NuoA, H, J, K, L, M, N constitute the membrane sector of the complex. It depends on [4Fe-4S] cluster as a cofactor.

It localises to the cell inner membrane. It catalyses the reaction a quinone + NADH + 5 H(+)(in) = a quinol + NAD(+) + 4 H(+)(out). In terms of biological role, NDH-1 shuttles electrons from NADH, via FMN and iron-sulfur (Fe-S) centers, to quinones in the respiratory chain. The immediate electron acceptor for the enzyme in this species is believed to be ubiquinone. Couples the redox reaction to proton translocation (for every two electrons transferred, four hydrogen ions are translocated across the cytoplasmic membrane), and thus conserves the redox energy in a proton gradient. The protein is NADH-quinone oxidoreductase subunit I of Yersinia pseudotuberculosis serotype O:1b (strain IP 31758).